The following is a 339-amino-acid chain: T-cell surface glycoprotein CD1a (339 aa).

An N-terminal signal peptide occupies residues 1–18; the sequence is MLFLQLPLLLVLLPGGDS. Residues 19–300 lie on the Extracellular side of the membrane; the sequence is EEGFQEPISF…IILYWEQHSS (282 aa). N-linked (GlcNAc...) asparagine glycans are attached at residues N38 and N75. Position 91–95 (91–95) interacts with a D-galactosylceramide; sequence FFVRF. 2 cysteine pairs are disulfide-bonded: C120–C184 and C224–C279. Residue N146 is glycosylated (N-linked (GlcNAc...) asparagine). One can recognise an Ig-like domain in the interval 185-295; sequence PRFVLGLLDA…LGGQDIILYW (111 aa). Residues 301-321 traverse the membrane as a helical segment; sequence VGWILLAVIVPLVLLTGLAFW. Topologically, residues 322 to 339 are cytoplasmic; it reads HRKHWKHCDPSSALHRLE.

As to quaternary structure, heterodimer with B2M (beta-2-microglobulin). Interacts with CD74.

The protein localises to the cell membrane. The protein resides in the membrane raft. Its subcellular location is the endosome membrane. Functionally, antigen-presenting protein that binds self and non-self lipid and glycolipid antigens and presents them to T-cell receptors on natural killer T-cells. This chain is T-cell surface glycoprotein CD1a (CD1A), found in Sus scrofa (Pig).